A 163-amino-acid chain; its full sequence is Protein-export protein SecB (163 aa).

This sequence belongs to the SecB family. Homotetramer, a dimer of dimers. One homotetramer interacts with 1 SecA dimer.

The protein localises to the cytoplasm. In terms of biological role, one of the proteins required for the normal export of preproteins out of the cell cytoplasm. It is a molecular chaperone that binds to a subset of precursor proteins, maintaining them in a translocation-competent state. It also specifically binds to its receptor SecA. The polypeptide is Protein-export protein SecB (Brucella canis (strain ATCC 23365 / NCTC 10854 / RM-666)).